A 37-amino-acid chain; its full sequence is Large ribosomal subunit protein bL36 (37 aa).

This sequence belongs to the bacterial ribosomal protein bL36 family.

In Oleidesulfovibrio alaskensis (strain ATCC BAA-1058 / DSM 17464 / G20) (Desulfovibrio alaskensis), this protein is Large ribosomal subunit protein bL36 (rpmJ).